Reading from the N-terminus, the 256-residue chain is Zinc metalloprotease (256 aa).

The active-site Proton donor is the H74.

Belongs to the peptidase M4 family. The cofactor is Zn(2+).

The protein localises to the secreted. In terms of biological role, may play a role in ulcer formation. Proteolytic digestion of gastric mucus has been suggested as an important mechanism by which its pathogenicity is at least partly exerted. This chain is Zinc metalloprotease (hap), found in Helicobacter pylori (Campylobacter pylori).